A 152-amino-acid polypeptide reads, in one-letter code: Methylglyoxal synthase (152 aa).

Residues 1–152 (MELTTRTIAA…YDRYLQQRLK (152 aa)) form the MGS-like domain. Substrate contacts are provided by residues H19, K23, 45 to 48 (TGTT), and 65 to 66 (SG). D71 functions as the Proton donor/acceptor in the catalytic mechanism. H98 contacts substrate.

It belongs to the methylglyoxal synthase family.

It catalyses the reaction dihydroxyacetone phosphate = methylglyoxal + phosphate. In terms of biological role, catalyzes the formation of methylglyoxal from dihydroxyacetone phosphate. The chain is Methylglyoxal synthase from Yersinia enterocolitica serotype O:8 / biotype 1B (strain NCTC 13174 / 8081).